The chain runs to 273 residues: NADPH-dependent 7-cyano-7-deazaguanine reductase (273 aa).

Residue 80–82 (IES) coordinates substrate. 82 to 83 (SK) contacts NADPH. Cys180 acts as the Thioimide intermediate in catalysis. Asp187 serves as the catalytic Proton donor. Residue 219–220 (HE) coordinates substrate. 248-249 (RG) serves as a coordination point for NADPH.

It belongs to the GTP cyclohydrolase I family. QueF type 2 subfamily. Homodimer.

It localises to the cytoplasm. It catalyses the reaction 7-aminomethyl-7-carbaguanine + 2 NADP(+) = 7-cyano-7-deazaguanine + 2 NADPH + 3 H(+). It functions in the pathway tRNA modification; tRNA-queuosine biosynthesis. In terms of biological role, catalyzes the NADPH-dependent reduction of 7-cyano-7-deazaguanine (preQ0) to 7-aminomethyl-7-deazaguanine (preQ1). This is NADPH-dependent 7-cyano-7-deazaguanine reductase from Bordetella avium (strain 197N).